The following is a 31-amino-acid chain: 23S rRNA methylase leader peptide (31 aa).

In terms of biological role, this peptide is involved in the control mechanism of the synthesis of the erythromycin resistance protein. The polypeptide is 23S rRNA methylase leader peptide (ermC) (Escherichia coli).